Reading from the N-terminus, the 291-residue chain is Porphobilinogen deaminase (291 aa).

At C237 the chain carries S-(dipyrrolylmethanemethyl)cysteine.

The protein belongs to the HMBS family. In terms of assembly, monomer. The cofactor is dipyrromethane.

It catalyses the reaction 4 porphobilinogen + H2O = hydroxymethylbilane + 4 NH4(+). It functions in the pathway porphyrin-containing compound metabolism; protoporphyrin-IX biosynthesis; coproporphyrinogen-III from 5-aminolevulinate: step 2/4. In terms of biological role, tetrapolymerization of the monopyrrole PBG into the hydroxymethylbilane pre-uroporphyrinogen in several discrete steps. This is Porphobilinogen deaminase from Clostridium perfringens (strain 13 / Type A).